The following is a 257-amino-acid chain: UPF0246 protein CLL_A2361 (257 aa).

This sequence belongs to the UPF0246 family.

This is UPF0246 protein CLL_A2361 from Clostridium botulinum (strain Eklund 17B / Type B).